The sequence spans 141 residues: Nucleoside diphosphate kinase (141 aa).

Positions 11, 59, 87, 93, 104, and 114 each coordinate ATP. Histidine 117 functions as the Pros-phosphohistidine intermediate in the catalytic mechanism.

It belongs to the NDK family. In terms of assembly, homotetramer. Mg(2+) serves as cofactor.

It localises to the cytoplasm. The enzyme catalyses a 2'-deoxyribonucleoside 5'-diphosphate + ATP = a 2'-deoxyribonucleoside 5'-triphosphate + ADP. It carries out the reaction a ribonucleoside 5'-diphosphate + ATP = a ribonucleoside 5'-triphosphate + ADP. Functionally, major role in the synthesis of nucleoside triphosphates other than ATP. The ATP gamma phosphate is transferred to the NDP beta phosphate via a ping-pong mechanism, using a phosphorylated active-site intermediate. This is Nucleoside diphosphate kinase from Verminephrobacter eiseniae (strain EF01-2).